A 156-amino-acid polypeptide reads, in one-letter code: 2-C-methyl-D-erythritol 2,4-cyclodiphosphate synthase (156 aa).

A divalent metal cation is bound by residues D10 and H12. 4-CDP-2-C-methyl-D-erythritol 2-phosphate contacts are provided by residues D10–H12 and H36–S37. An a divalent metal cation-binding site is contributed by H44. 4-CDP-2-C-methyl-D-erythritol 2-phosphate is bound by residues D58–G60 and F63–D67.

It belongs to the IspF family. As to quaternary structure, homotrimer. A divalent metal cation serves as cofactor.

It catalyses the reaction 4-CDP-2-C-methyl-D-erythritol 2-phosphate = 2-C-methyl-D-erythritol 2,4-cyclic diphosphate + CMP. Its pathway is isoprenoid biosynthesis; isopentenyl diphosphate biosynthesis via DXP pathway; isopentenyl diphosphate from 1-deoxy-D-xylulose 5-phosphate: step 4/6. Involved in the biosynthesis of isopentenyl diphosphate (IPP) and dimethylallyl diphosphate (DMAPP), two major building blocks of isoprenoid compounds. Catalyzes the conversion of 4-diphosphocytidyl-2-C-methyl-D-erythritol 2-phosphate (CDP-ME2P) to 2-C-methyl-D-erythritol 2,4-cyclodiphosphate (ME-CPP) with a corresponding release of cytidine 5-monophosphate (CMP). The protein is 2-C-methyl-D-erythritol 2,4-cyclodiphosphate synthase of Aquifex aeolicus (strain VF5).